A 289-amino-acid chain; its full sequence is Tachykinins (289 aa).

A signal peptide spans 1–24 (MRSQGGSFAVALLLLLLLTAAATA). Positions 25–49 (ADAEPDVESSVSTLPPGADAPRRMV) are excised as a propeptide. A disordered region spans residues 28-80 (EPDVESSVSTLPPGADAPRRMVKRAPTSSFIGMRGKKEDEKDQRAADWMGPDP). The residue at position 61 (Arg-61) is an Arginine amide. Positions 62 to 72 (GKKEDEKDQRA) are enriched in basic and acidic residues. Residue Asn-95 is modified to Asparagine amide. The residue at position 110 (Arg-110) is an Arginine amide. Valine amide is present on Val-155. A disordered region spans residues 156-175 (GKRAPTGFTGMRGKRPMSGD). Arg-167, Arg-198, Arg-237, and Arg-281 each carry arginine amide. The propeptide occupies 285–289 (PALAE).

Belongs to the tachykinin family.

Its subcellular location is the secreted. Functionally, tachykinins are active peptides which excite neurons, evoke behavioral responses, are potent vasodilators and secretagogues, and contract (directly or indirectly) many smooth muscles. Stimulates gut muscle contractions. This Drosophila pseudoobscura pseudoobscura (Fruit fly) protein is Tachykinins.